A 360-amino-acid chain; its full sequence is Polyamine aminopropyltransferase 2 (360 aa).

Residues 68–299 enclose the PABS domain; it reads DIWDEISLKE…TDWGFHIAAN (232 aa). Glutamine 94 lines the S-methyl-5'-thioadenosine pocket. Spermidine-binding residues include histidine 123 and aspartate 147. Residues aspartate 167 and 201-202 contribute to the S-methyl-5'-thioadenosine site; that span reads DA. Catalysis depends on aspartate 219, which acts as the Proton acceptor.

This sequence belongs to the spermidine/spermine synthase family. In terms of assembly, homodimer or homotetramer.

The protein localises to the cytoplasm. The catalysed reaction is S-adenosyl 3-(methylsulfanyl)propylamine + putrescine = S-methyl-5'-thioadenosine + spermidine + H(+). It participates in amine and polyamine biosynthesis; spermidine biosynthesis; spermidine from putrescine: step 1/1. Functionally, catalyzes the irreversible transfer of a propylamine group from the amino donor S-adenosylmethioninamine (decarboxy-AdoMet) to putrescine (1,4-diaminobutane) to yield spermidine. This Bacillus anthracis protein is Polyamine aminopropyltransferase 2.